The sequence spans 269 residues: Prespore protein Dd31 (269 aa).

Residues 1-17 are compositionally biased toward polar residues; it reads MEHNNNPGTPQMSSEFP. The disordered stretch occupies residues 1–35; sequence MEHNNNPGTPQMSSEFPASTTQTSSSAAAYDNSSH. A compositionally biased stretch (low complexity) spans 18–29; it reads ASTTQTSSSAAA. Transmembrane regions (helical) follow at residues 111–131, 139–159, 177–197, and 225–245; these read FGIF…VVSI, VDNF…LYFL, YAYL…FVGF, and VSLF…IMYL.

Belongs to the SCAMP family.

The protein resides in the membrane. Its subcellular location is the spore coat. The sequence is that of Prespore protein Dd31 (spiA) from Dictyostelium discoideum (Social amoeba).